The primary structure comprises 93 residues: Phosphocarrier protein HPr (93 aa).

In terms of domain architecture, HPr spans 2–89 (AERRVNVGWA…KLVAEGLEEL (88 aa)). The active-site Pros-phosphohistidine intermediate is the His15.

It belongs to the HPr family.

Its subcellular location is the cytoplasm. In terms of biological role, general (non sugar-specific) component of the phosphoenolpyruvate-dependent sugar phosphotransferase system (sugar PTS). This major carbohydrate active-transport system catalyzes the phosphorylation of incoming sugar substrates concomitantly with their translocation across the cell membrane. The phosphoryl group from phosphoenolpyruvate (PEP) is transferred to the phosphoryl carrier protein HPr by enzyme I. Phospho-HPr then transfers it to the PTS EIIA domain. The chain is Phosphocarrier protein HPr (ptsH) from Streptomyces coelicolor (strain ATCC BAA-471 / A3(2) / M145).